The sequence spans 993 residues: Desmoglein-3 (993 aa).

A signal peptide spans 1 to 23; that stretch reads MTCLFPRALGSLALLMVVLLVQG. A propeptide spanning residues 24–49 is cleaved from the precursor; that stretch reads ELHVKPGGQHREDGTALQLAKRRYKR. Cadherin domains are found at residues 50 to 157, 158 to 267, 268 to 388, and 384 to 495; these read EWVK…PPIF, SQTI…FPVL, RESQ…PPSK, and RPPS…CPSV. Residues 50 to 617 lie on the Extracellular side of the membrane; it reads EWVKFAKPCR…YGESSWRLGP (568 aa). N-linked (GlcNAc...) asparagine glycosylation is found at Asn110 and Asn180. 2 N-linked (GlcNAc...) asparagine glycosylation sites follow: Asn459 and Asn546. The chain crosses the membrane as a helical span at residues 618–638; that stretch reads AAIGLILLGLLMLLLAPLLLL. Residues 639 to 993 are Cytoplasmic-facing; the sequence is TCDCGSGPIG…LYTKETCSHL (355 aa). The interval 641–714 is required for interaction with CTNND1 and localization at cell-cell junctions; the sequence is DCGSGPIGGA…NTYAGGTMVE (74 aa). Positions 845 to 876 are disordered; sequence AKQAKPGPKDSGSGADTCARSMEVPQSGSNRY. 2 Desmoglein repeat repeats span residues 905–930 and 931–961; these read MSTS…LLTE and TYST…ERVI.

Homodimer. Part of a complex that contains DSG3, PKP1, YAP1 and YWHAG; the complex is required for localization of DSG3 and YAP1 to the cell membrane in keratinocytes. Interacts with PKP2. Interacts with CTNND1; the interaction facilitates DSG3 localization and retention at cell-cell junctions. Interacts with CDH1; the interaction is required for CDH1 localization to developing adherens junctions. Interacts with RAC1; the interaction is required for DSG3 translocation to cell-cell junctions, organization of cortical F-actin bundles and actin anchoring at cell-cell junctions. Interacts with DSC3; the interaction may limit the interaction of DSC3 with p38MAPK family members and therefore repress p38MAPK signaling activation. As to expression, expressed in the basal layer of the outer root sheath of the telogen hair club, specifically at the cell membrane between the apex of the cells and the surrounding hair club (at protein level). Expression is less abundant between the lateral margins of the outer root sheath basal cells (at protein level). Expressed in epidermis. Expressed in the epithelium of the tongue.

Its subcellular location is the cell membrane. It is found in the cell junction. The protein resides in the desmosome. The protein localises to the cytoplasm. It localises to the tight junction. A component of desmosome cell-cell junctions which are required for positive regulation of cellular adhesion. Required for adherens and desmosome junction assembly in response to mechanical force in keratinocytes. Required for desmosome-mediated cell-cell adhesion of cells surrounding the telogen hair club and the basal layer of the outer root sheath epithelium, consequently is essential for the anchoring of telogen hairs in the hair follicle. Required for the maintenance of the epithelial barrier via promoting desmosome-mediated intercellular attachment of suprabasal epithelium to basal cells. May play a role in the protein stability of the desmosome plaque components DSP, JUP, PKP1, PKP2 and PKP3. Required for YAP1 localization at the plasma membrane in keratinocytes in response to mechanical strain, via the formation of an interaction complex composed of DSG3, PKP1 and YWHAG. May also be involved in the positive regulation of YAP1 target gene transcription and as a result cell proliferation. Positively regulates cellular contractility and cell junction formation via organization of cortical F-actin bundles and anchoring of actin to tight junctions, in conjunction with RAC1. The cytoplasmic pool of DSG3 is required for the localization of CDH1 and CTNNB1 at developing adherens junctions, potentially via modulation of SRC activity. Inhibits keratinocyte migration via suppression of p38MAPK signaling, may therefore play a role in moderating wound healing. The chain is Desmoglein-3 (Dsg3) from Mus musculus (Mouse).